Consider the following 333-residue polypeptide: HTH-type transcriptional regulator pepR1 (333 aa).

The 55-residue stretch at 6–60 folds into the HTH lacI-type domain; the sequence is VTIYDVAREAKVSMATVSRVVNGNNNVRKETRDRVMEVIKRLHYQPNAVAQGLAS. The H-T-H motif DNA-binding region spans 8–27; that stretch reads IYDVAREAKVSMATVSRVVN.

In terms of biological role, transcriptional regulator of the pepQ gene for prolidase. The polypeptide is HTH-type transcriptional regulator pepR1 (pepR1) (Lactobacillus delbrueckii subsp. lactis).